We begin with the raw amino-acid sequence, 370 residues long: Aspartate beta-hydroxylase domain-containing protein 2 (370 aa).

At 1–57 (MVWALPRTSSPSCIAPSYKPDSGWIKMSAEWLIDWSCLLNGLRDLIAGCIQAVRDCN) the chain is on the cytoplasmic side. A helical membrane pass occupies residues 58-78 (SFALTTVICLLMLFAWYCYRV). The Lumenal segment spans residues 79–370 (GKDQPRSPFA…ALDSIFAPGR (292 aa)). Asparagine 212 is a glycosylation site (N-linked (GlcNAc...) asparagine). Positions 229 and 273 each coordinate 2-oxoglutarate. A Fe cation-binding site is contributed by histidine 284. Residue 293–295 (RCH) participates in 2-oxoglutarate binding. Histidine 329 provides a ligand contact to Fe cation. Arginine 342 contributes to the 2-oxoglutarate binding site.

The protein belongs to the aspartyl/asparaginyl beta-hydroxylase family. It depends on Fe cation as a cofactor.

The protein localises to the membrane. In terms of biological role, may function as 2-oxoglutarate-dependent dioxygenase. The protein is Aspartate beta-hydroxylase domain-containing protein 2 (asphd2) of Xenopus tropicalis (Western clawed frog).